The primary structure comprises 670 residues: Transcription factor 4 (670 aa).

The interval 1-83 is essential for MYOD1 inhibition; sequence MHHQQRMAAL…GTPYDHMTSR (83 aa). Disordered stretches follow at residues 24–244, 262–320, 335–378, 406–426, 465–573, and 637–670; these read AMFS…LGNS, LSYP…SQTG, HTNN…EGPL, PSTA…PSHN, SLLP…MANN, and KRRE…MGQM. The span at 29–49 shows a compositional bias: polar residues; that stretch reads PVSSGKNGPTSLASGHFTGSN. 3 positions are modified to phosphoserine: Ser-66, Ser-87, and Ser-92. 4 stretches are compositionally biased toward polar residues: residues 107–125, 136–154, 205–215, and 265–305; these read GSYS…QQSL, GTLS…SSNN, PAASTFPSSFF, and PSHS…TDSI. The span at 336 to 347 shows a compositional bias: low complexity; it reads TNNSFSSNPSTP. Residues 364-373 show a composition bias toward polar residues; it reads NGGQASSSPN. At Ser-371 the chain carries Phosphoserine. A leucine-zipper region spans residues 378–399; it reads LHSLQSRIEDRLERLDDAIHVL. Low complexity-rich tracts occupy residues 466–479 and 502–511; these read LLPN…LPVQ and GQSVSSGSSE. Residue Ser-514 is modified to Phosphoserine. 2 stretches are compositionally biased toward basic and acidic residues: residues 526–542 and 558–573; these read KSSE…DIKS and PEQK…MANN. In terms of domain architecture, bHLH spans 567–620; sequence ERRMANNARERLRVRDINEAFKELGRMVQLHLKSDKPQTKLLILHQAVAVILSL. The tract at residues 622 to 645 is class A specific domain; sequence QQVRERNLNPKAACLKRREEEKVS.

In terms of assembly, efficient DNA binding requires dimerization with another bHLH protein. Isoform 2 seems to form inactive heterodimers with MYOD1. Interacts with HIVEP2. Interacts with NEUROD2. Interacts with AGBL1. Interacts with BHLHA9. Expressed in the cerebral cortex, Purkinje and granule cell layers of the cerebellum, olfactory neuroepithelium, pyramidal cells of hippocampal layers CA1-CA4, and in the granular cells of the dentate gyrus.

The protein localises to the nucleus. Its function is as follows. Transcription factor that binds to the immunoglobulin enhancer Mu-E5/KE5-motif. Involved in the initiation of neuronal differentiation. Activates transcription by binding to the E box (5'-CANNTG-3'). Isoform 2 inhibits MYOD1 activation of the cardiac alpha-actin promoter. Binds to the E-box present in the somatostatin receptor 2 initiator element (SSTR2-INR) to activate transcription. May have a regulatory function in developmental processes as well as during neuronal plasticity. The protein is Transcription factor 4 (Tcf4) of Mus musculus (Mouse).